Consider the following 96-residue polypeptide: Co-chaperonin GroES (96 aa).

It belongs to the GroES chaperonin family. In terms of assembly, heptamer of 7 subunits arranged in a ring. Interacts with the chaperonin GroEL.

The protein resides in the cytoplasm. In terms of biological role, together with the chaperonin GroEL, plays an essential role in assisting protein folding. The GroEL-GroES system forms a nano-cage that allows encapsulation of the non-native substrate proteins and provides a physical environment optimized to promote and accelerate protein folding. GroES binds to the apical surface of the GroEL ring, thereby capping the opening of the GroEL channel. The polypeptide is Co-chaperonin GroES (Shewanella sediminis (strain HAW-EB3)).